Consider the following 213-residue polypeptide: Cytochrome b-c1 complex subunit Rieske, mitochondrial (213 aa).

The transit peptide at 1 to 29 (MSSLAFRTLRNGLGLKSSVRALSTTTTTL) directs the protein to the mitochondrion. Residues 30 to 47 (SNYQQPDYSSYLNNKSGQ) lie on the Mitochondrial matrix side of the membrane. The chain crosses the membrane as a helical span at residues 48–77 (GSRNFTYFMVGSMGLLSAAGAKSTVEAFLS). At 78 to 213 (SFAASADVLA…FTDDETLLVG (136 aa)) the chain is on the mitochondrial intermembrane side. A Rieske domain is found at 116–211 (RHRTADEIEE…YDFTDDETLL (96 aa)). Positions 156, 158, 175, and 178 each coordinate [2Fe-2S] cluster. C161 and C177 are oxidised to a cystine.

The protein belongs to the Rieske iron-sulfur protein family. In terms of assembly, component of the ubiquinol-cytochrome c oxidoreductase (cytochrome b-c1 complex, complex III, CIII), a multisubunit enzyme composed of 10 subunits. The complex is composed of 3 respiratory subunits cytochrome b (COB), cytochrome c1 (CYT1) and Rieske protein (RIP1), 2 core protein subunits COR1 and QCR2, and 5 low-molecular weight protein subunits QCR6, QCR7, QCR8, QCR9 and QCR10. The complex exists as an obligatory dimer and forms supercomplexes (SCs) in the inner mitochondrial membrane with a monomer or a dimer of cytochrome c oxidase (complex IV, CIV), resulting in 2 different assemblies (supercomplexes III(2)IV and III(2)IV(2)). [2Fe-2S] cluster is required as a cofactor.

It localises to the mitochondrion inner membrane. The catalysed reaction is a quinol + 2 Fe(III)-[cytochrome c](out) = a quinone + 2 Fe(II)-[cytochrome c](out) + 2 H(+)(out). In terms of biological role, component of the ubiquinol-cytochrome c oxidoreductase, a multisubunit transmembrane complex that is part of the mitochondrial electron transport chain which drives oxidative phosphorylation. The complex plays an important role in the uptake of multiple carbon sources present in different host niches. In Candida albicans (strain SC5314 / ATCC MYA-2876) (Yeast), this protein is Cytochrome b-c1 complex subunit Rieske, mitochondrial.